We begin with the raw amino-acid sequence, 32 residues long: Calcitonin (32 aa).

A disulfide bridge connects residues Cys1 and Cys7. Pro32 carries the proline amide modification.

It belongs to the calcitonin family.

The protein localises to the secreted. In terms of biological role, causes a rapid but short-lived drop in the level of calcium and phosphate in blood by promoting the incorporation of those ions in the bones. The chain is Calcitonin from Anguilla japonica (Japanese eel).